A 165-amino-acid polypeptide reads, in one-letter code: MERFFENAMYASRWLLAPVYFGLSLALVALSIKFFQEIFHVLPNIFSVAESDLILVLLSLVDMTLVGGLLVMVMFSGYENFVSQLDIAEHKEKLSWLGKMDASSLKNKVAASIVAISSIHLLRVFMDAKNIPDNKLMWYVIIHLTFVLSAFVMGYLDKINRSGKY.

The next 3 helical transmembrane spans lie at 15-35 (LLAPVYFGLSLALVALSIKFF), 53-73 (LILVLLSLVDMTLVGGLLVMV), and 136-156 (LMWYVIIHLTFVLSAFVMGYL).

This sequence belongs to the UPF0114 family.

The protein localises to the cell membrane. This is UPF0114 protein Ent638_3411 from Enterobacter sp. (strain 638).